Here is a 300-residue protein sequence, read N- to C-terminus: 4-hydroxy-tetrahydrodipicolinate synthase (300 aa).

Threonine 45 is a pyruvate binding site. The active-site Proton donor/acceptor is the tyrosine 140. The active-site Schiff-base intermediate with substrate is the lysine 169. Isoleucine 210 is a binding site for pyruvate.

This sequence belongs to the DapA family. As to quaternary structure, homotetramer; dimer of dimers.

The protein resides in the cytoplasm. The enzyme catalyses L-aspartate 4-semialdehyde + pyruvate = (2S,4S)-4-hydroxy-2,3,4,5-tetrahydrodipicolinate + H2O + H(+). It functions in the pathway amino-acid biosynthesis; L-lysine biosynthesis via DAP pathway; (S)-tetrahydrodipicolinate from L-aspartate: step 3/4. Functionally, catalyzes the condensation of (S)-aspartate-beta-semialdehyde [(S)-ASA] and pyruvate to 4-hydroxy-tetrahydrodipicolinate (HTPA). The polypeptide is 4-hydroxy-tetrahydrodipicolinate synthase (Helicobacter pylori (strain J99 / ATCC 700824) (Campylobacter pylori J99)).